The primary structure comprises 193 residues: Crossover junction endodeoxyribonuclease RuvC (193 aa).

Residues aspartate 7, glutamate 68, and aspartate 141 contribute to the active site. Positions 7, 68, and 141 each coordinate Mg(2+). Residues 174-193 are disordered; the sequence is RQWAQATQHATRRRGVRRGM. Over residues 183 to 193 the composition is skewed to basic residues; sequence ATRRRGVRRGM.

This sequence belongs to the RuvC family. Homodimer which binds Holliday junction (HJ) DNA. The HJ becomes 2-fold symmetrical on binding to RuvC with unstacked arms; it has a different conformation from HJ DNA in complex with RuvA. In the full resolvosome a probable DNA-RuvA(4)-RuvB(12)-RuvC(2) complex forms which resolves the HJ. It depends on Mg(2+) as a cofactor.

The protein resides in the cytoplasm. It carries out the reaction Endonucleolytic cleavage at a junction such as a reciprocal single-stranded crossover between two homologous DNA duplexes (Holliday junction).. The RuvA-RuvB-RuvC complex processes Holliday junction (HJ) DNA during genetic recombination and DNA repair. Endonuclease that resolves HJ intermediates. Cleaves cruciform DNA by making single-stranded nicks across the HJ at symmetrical positions within the homologous arms, yielding a 5'-phosphate and a 3'-hydroxyl group; requires a central core of homology in the junction. The consensus cleavage sequence is 5'-(A/T)TT(C/G)-3'. Cleavage occurs on the 3'-side of the TT dinucleotide at the point of strand exchange. HJ branch migration catalyzed by RuvA-RuvB allows RuvC to scan DNA until it finds its consensus sequence, where it cleaves and resolves the cruciform DNA. This Bifidobacterium animalis subsp. lactis (strain AD011) protein is Crossover junction endodeoxyribonuclease RuvC.